Consider the following 379-residue polypeptide: Queuine tRNA-ribosyltransferase (379 aa).

The active-site Proton acceptor is the D94. Substrate contacts are provided by residues 94-98 (DSGGF), D148, Q191, and G218. The segment at 249-255 (GVGSPDA) is RNA binding. D268 serves as the catalytic Nucleophile. The RNA binding; important for wobble base 34 recognition stretch occupies residues 273 to 277 (TRIAR). Residues C306, C308, C311, and H337 each coordinate Zn(2+).

This sequence belongs to the queuine tRNA-ribosyltransferase family. Homodimer. Within each dimer, one monomer is responsible for RNA recognition and catalysis, while the other monomer binds to the replacement base PreQ1. Zn(2+) is required as a cofactor.

It carries out the reaction 7-aminomethyl-7-carbaguanine + guanosine(34) in tRNA = 7-aminomethyl-7-carbaguanosine(34) in tRNA + guanine. It functions in the pathway tRNA modification; tRNA-queuosine biosynthesis. In terms of biological role, catalyzes the base-exchange of a guanine (G) residue with the queuine precursor 7-aminomethyl-7-deazaguanine (PreQ1) at position 34 (anticodon wobble position) in tRNAs with GU(N) anticodons (tRNA-Asp, -Asn, -His and -Tyr). Catalysis occurs through a double-displacement mechanism. The nucleophile active site attacks the C1' of nucleotide 34 to detach the guanine base from the RNA, forming a covalent enzyme-RNA intermediate. The proton acceptor active site deprotonates the incoming PreQ1, allowing a nucleophilic attack on the C1' of the ribose to form the product. After dissociation, two additional enzymatic reactions on the tRNA convert PreQ1 to queuine (Q), resulting in the hypermodified nucleoside queuosine (7-(((4,5-cis-dihydroxy-2-cyclopenten-1-yl)amino)methyl)-7-deazaguanosine). This chain is Queuine tRNA-ribosyltransferase, found in Staphylococcus epidermidis (strain ATCC 35984 / DSM 28319 / BCRC 17069 / CCUG 31568 / BM 3577 / RP62A).